Reading from the N-terminus, the 123-residue chain is Small ribosomal subunit protein uS12 (123 aa).

Aspartate 89 is modified (3-methylthioaspartic acid).

It belongs to the universal ribosomal protein uS12 family. Part of the 30S ribosomal subunit. Contacts proteins S8 and S17. May interact with IF1 in the 30S initiation complex.

Functionally, with S4 and S5 plays an important role in translational accuracy. Its function is as follows. Interacts with and stabilizes bases of the 16S rRNA that are involved in tRNA selection in the A site and with the mRNA backbone. Located at the interface of the 30S and 50S subunits, it traverses the body of the 30S subunit contacting proteins on the other side and probably holding the rRNA structure together. The combined cluster of proteins S8, S12 and S17 appears to hold together the shoulder and platform of the 30S subunit. The sequence is that of Small ribosomal subunit protein uS12 from Nitrobacter hamburgensis (strain DSM 10229 / NCIMB 13809 / X14).